The sequence spans 361 residues: NAD(P)H-quinone oxidoreductase subunit 1, chloroplastic (361 aa).

Helical transmembrane passes span 28–48, 99–119, 128–148, 249–269, 270–290, 301–321, and 341–361; these read IWVL…VLVI, FTIG…VIPF, LSIG…GLLM, YSGI…LVSS, LFVT…LFVP, TIIC…ISIA, and FLLP…LLSL.

Belongs to the complex I subunit 1 family. As to quaternary structure, NDH is composed of at least 16 different subunits, 5 of which are encoded in the nucleus.

It is found in the plastid. The protein localises to the chloroplast thylakoid membrane. It carries out the reaction a plastoquinone + NADH + (n+1) H(+)(in) = a plastoquinol + NAD(+) + n H(+)(out). It catalyses the reaction a plastoquinone + NADPH + (n+1) H(+)(in) = a plastoquinol + NADP(+) + n H(+)(out). In terms of biological role, NDH shuttles electrons from NAD(P)H:plastoquinone, via FMN and iron-sulfur (Fe-S) centers, to quinones in the photosynthetic chain and possibly in a chloroplast respiratory chain. The immediate electron acceptor for the enzyme in this species is believed to be plastoquinone. Couples the redox reaction to proton translocation, and thus conserves the redox energy in a proton gradient. The sequence is that of NAD(P)H-quinone oxidoreductase subunit 1, chloroplastic from Jasminum nudiflorum (Winter jasmine).